The sequence spans 491 residues: Serine/threonine-protein phosphatase 2A regulatory subunit B'' subunit delta (491 aa).

The region spanning 331–366 (TTPTSTEYWFRCMDLDGDGALSMFELEFFYEEQAQR) is the EF-hand domain. The Ca(2+) site is built by Asp-344, Asp-346, Asp-348, and Glu-355. Composition is skewed to acidic residues over residues 460–473 (AMAE…EGSD) and 481–491 (ADEDCDDLEPL). The disordered stretch occupies residues 460-491 (AMAEDDDDHDEGSDPIDLYGLADEDCDDLEPL).

In terms of assembly, PP2A consists of a common heterodimeric core enzyme, composed of a 36 kDa catalytic subunit (subunit C) and a 65 kDa constant regulatory subunit (PR65 or subunit A), that associates with a variety of regulatory subunits. Proteins that associate with the core dimer include three families of regulatory subunits B (the R2/B/PR55/B55, R3/B''/PR72/PR130/PR59 and R5/B'/B56 families), the 48 kDa variable regulatory subunit, viral proteins, and cell signaling molecules. As to expression, expressed in testis, kidney, liver, lung, spleen, brain and heart.

Functionally, the B regulatory subunit might modulate substrate selectivity and catalytic activity, and might also direct the localization of the catalytic enzyme to a particular subcellular compartment. Interacts with retinoblastoma-related protein p107 (in vivo). May target PP2A core dimer to p107 resulting in dephosphorylation of p107. The sequence is that of Serine/threonine-protein phosphatase 2A regulatory subunit B'' subunit delta (Ppp2r3d) from Mus musculus (Mouse).